A 358-amino-acid polypeptide reads, in one-letter code: uncharacterized protein (358 aa).

An EF-hand domain is found at 229–264 (KQLHEFKLAFDYFDQEKNGWLDYEHFELCLKSQGYN). Ca(2+) contacts are provided by D242, N246, W248, and H253.

This is an uncharacterized protein from Caenorhabditis elegans.